The sequence spans 275 residues: Large ribosomal subunit protein uL2 (275 aa).

Residues 220–275 (VRGAAMNPRDHPHGGGEGRAPRGMPTPKTKWGKPARGVKTRHNPRTDPFIIRRRTR) form a disordered region. The span at 227–239 (PRDHPHGGGEGRA) shows a compositional bias: basic and acidic residues. Residues 249–262 (KWGKPARGVKTRHN) show a composition bias toward basic residues.

This sequence belongs to the universal ribosomal protein uL2 family. As to quaternary structure, part of the 50S ribosomal subunit. Forms a bridge to the 30S subunit in the 70S ribosome.

Functionally, one of the primary rRNA binding proteins. Required for association of the 30S and 50S subunits to form the 70S ribosome, for tRNA binding and peptide bond formation. It has been suggested to have peptidyltransferase activity; this is somewhat controversial. Makes several contacts with the 16S rRNA in the 70S ribosome. In Roseiflexus sp. (strain RS-1), this protein is Large ribosomal subunit protein uL2.